Consider the following 602-residue polypeptide: PEX5-related protein (602 aa).

Disordered regions lie at residues 94–140 (VSQT…PETS) and 167–206 (HLMA…LNSE). S181, S229, S233, and S237 each carry phosphoserine. TPR repeat units follow at residues 302–335 (WPGA…DPGN), 336–369 (AEAW…QPNN), and 371–403 (KALM…NPKY). 2 positions are modified to phosphoserine: S421 and S423. 3 TPR repeats span residues 450–483 (PDLQ…RPED), 485–517 (SLWN…QPGF), and 519–551 (RSRY…QRKS).

The protein belongs to the peroxisomal targeting signal receptor family. Forms an obligate 4:4 complex with HCN2. Interacts with RAB8B. Interacts with HCN3. Interacts with HCN4 with a 4:4 HCN4:PEX5L stoichiometry; reduces the effects of cAMP on the voltage-dependence and rate of activation of HCN4. Brain specific.

The protein localises to the cytoplasm. The protein resides in the membrane. Accessory subunit of hyperpolarization-activated cyclic nucleotide-gated (HCN) channels, regulating their cell-surface expression and cyclic nucleotide dependence. In Rattus norvegicus (Rat), this protein is PEX5-related protein (Pex5l).